A 424-amino-acid chain; its full sequence is Histidine--tRNA ligase (424 aa).

Belongs to the class-II aminoacyl-tRNA synthetase family. As to quaternary structure, homodimer.

The protein localises to the cytoplasm. It carries out the reaction tRNA(His) + L-histidine + ATP = L-histidyl-tRNA(His) + AMP + diphosphate + H(+). The polypeptide is Histidine--tRNA ligase (Bacillus velezensis (strain DSM 23117 / BGSC 10A6 / LMG 26770 / FZB42) (Bacillus amyloliquefaciens subsp. plantarum)).